The chain runs to 374 residues: Glutamate 5-kinase (374 aa).

Residue Lys-16 participates in ATP binding. Residues Ser-56, Asp-143, and Asn-155 each coordinate substrate. 175 to 176 provides a ligand contact to ATP; it reads TD. The PUA domain occupies 282-360; that stretch reads RGRVVLDAGA…SEIEAVLGYV (79 aa).

It belongs to the glutamate 5-kinase family.

It localises to the cytoplasm. The enzyme catalyses L-glutamate + ATP = L-glutamyl 5-phosphate + ADP. The protein operates within amino-acid biosynthesis; L-proline biosynthesis; L-glutamate 5-semialdehyde from L-glutamate: step 1/2. Catalyzes the transfer of a phosphate group to glutamate to form L-glutamate 5-phosphate. The chain is Glutamate 5-kinase from Ralstonia pickettii (strain 12J).